Consider the following 153-residue polypeptide: Small ribosomal subunit protein uS19 (153 aa).

Residues 1–63 (MGFRGAWNKR…QEIWDEFRAF (63 aa)) form a unknown region. The small ribosomal subunit protein uS19 stretch occupies residues 64 to 153 (VNKKAWVDPK…EKSAKVVKKK (90 aa)).

This sequence belongs to the universal ribosomal protein uS19 family.

In terms of biological role, protein S19 forms a complex with S13 that binds strongly to the 16S ribosomal RNA. This Hydrogenobaculum sp. (strain Y04AAS1) protein is Small ribosomal subunit protein uS19.